Consider the following 391-residue polypeptide: Lipoyl synthase, mitochondrial (391 aa).

The transit peptide at 1-44 directs the protein to the mitochondrion; it reads MVHPHLSRTKRTFFSHSSQMISRHIRKTNSLAFVRALSASETAV. 7 residues coordinate [4Fe-4S] cluster: Cys120, Cys125, Cys131, Cys150, Cys154, Cys157, and Ser365. The Radical SAM core domain occupies 135–354; it reads KKSEATATIM…KEVALEMGFL (220 aa).

Belongs to the radical SAM superfamily. Lipoyl synthase family. [4Fe-4S] cluster is required as a cofactor.

Its subcellular location is the mitochondrion. The enzyme catalyses [[Fe-S] cluster scaffold protein carrying a second [4Fe-4S](2+) cluster] + N(6)-octanoyl-L-lysyl-[protein] + 2 oxidized [2Fe-2S]-[ferredoxin] + 2 S-adenosyl-L-methionine + 4 H(+) = [[Fe-S] cluster scaffold protein] + N(6)-[(R)-dihydrolipoyl]-L-lysyl-[protein] + 4 Fe(3+) + 2 hydrogen sulfide + 2 5'-deoxyadenosine + 2 L-methionine + 2 reduced [2Fe-2S]-[ferredoxin]. It participates in protein modification; protein lipoylation via endogenous pathway; protein N(6)-(lipoyl)lysine from octanoyl-[acyl-carrier-protein]: step 2/2. Functionally, catalyzes the radical-mediated insertion of two sulfur atoms into the C-6 and C-8 positions of the octanoyl moiety bound to the lipoyl domains of lipoate-dependent enzymes, thereby converting the octanoylated domains into lipoylated derivatives. This Clavispora lusitaniae (strain ATCC 42720) (Yeast) protein is Lipoyl synthase, mitochondrial.